The primary structure comprises 232 residues: Putative N-acetylmannosamine-6-phosphate 2-epimerase (232 aa).

It belongs to the NanE family.

The catalysed reaction is an N-acyl-D-glucosamine 6-phosphate = an N-acyl-D-mannosamine 6-phosphate. It functions in the pathway amino-sugar metabolism; N-acetylneuraminate degradation; D-fructose 6-phosphate from N-acetylneuraminate: step 3/5. Functionally, converts N-acetylmannosamine-6-phosphate (ManNAc-6-P) to N-acetylglucosamine-6-phosphate (GlcNAc-6-P). The polypeptide is Putative N-acetylmannosamine-6-phosphate 2-epimerase (Borreliella afzelii (strain PKo) (Borrelia afzelii)).